Reading from the N-terminus, the 349-residue chain is MDLFDKLKELHEQGLAEIKKATDEQTLNKIRVELVGRKGELTKILHSMRDVAPENRREVGQKVNELRDLFNKQLDTTKAKIVKAVLAKKLEDEKIDVTLPGREGHLGSKHPINIILDDLESYFIGMGYKVVQGPEIETDHYCFEMMNLPKDHPARDMQATFYIDGEDLLRTQTSGDQARVLEKHDFSKSPLKMVGPGKVYRRDDDDATHSHQFMQMEGLVVDKNVTMSDLKGTLEMIAKHVFGQDRATRLRPSYFPFTEPSVEMDVSCFNCDGKGCPICKYTGWIEVLGAGMVHPNVLENAGVDSTVYGGFAFGLGLDRFAILKYGIDDIRDFYTNDVRFLKQFRKEEN.

Position 259 (Glu259) interacts with Mg(2+).

This sequence belongs to the class-II aminoacyl-tRNA synthetase family. Phe-tRNA synthetase alpha subunit type 1 subfamily. As to quaternary structure, tetramer of two alpha and two beta subunits. Mg(2+) is required as a cofactor.

The protein localises to the cytoplasm. It catalyses the reaction tRNA(Phe) + L-phenylalanine + ATP = L-phenylalanyl-tRNA(Phe) + AMP + diphosphate + H(+). The sequence is that of Phenylalanine--tRNA ligase alpha subunit from Lactobacillus helveticus (strain DPC 4571).